The following is a 708-amino-acid chain: MSFCLTELYLWSLKNNLHIGDEDVGVHQYHEKKEAALHPDYGFLEEKQQWMESRGFPWILKNKRPEKLRDNLTELEELMQSSECVLSKWKNKYVCQLLFGSGVLVSISLSGPQLEKVVIDRSLVGKLISNPISDAIFTDSFIILSFLKENKLCLIQFTKKINSPDINRQLDKLSLLDLKISYTDIPGPKGRHLVRHLAINSMQDLALCWWPVPVDDVKPWSPVSSEKDRANLVLLSNSSCKLEVLSYIRTEGDLLNACFSINQPYQICTVEHSLNSNKEPMADRFIYECVRNKIQCVSVTRVPLRSRVISCAVNTSEDKLVLGCEDSSLILYESDCKVTLLAQADLLPDLIRWHPNGTIFVVASSQGELQIFDMALSPIRAQILAEEIEPNSTIQVCKQFNVSSTLVEMHWAAPHTLLQNMDMTDIYNLLYLRFDGGPIGVLQLKLGAICRGQLGAMEIISQYIRHDEVDEAVGLLSSMNWNTMGHQCFTSMTAIVNHLLRQRLTPDREAQLEASLGTFYSPTRPLLDTIVLQYRDPISRYARRFFHHLLRYQRFEKAFLLAVDIGARDLFMDIHYLALDKGELALAKVARKKAEEIDAESINSGVEPLLPTDTLADVNEAFVDLSLIPQVEDRILGSFPSTDLGAHNSIQRNANRQLVHIENEIGIEVYAESLDKSLPWNQECFEEDFAEENPEGIGSLKVVHFGLV.

WD repeat units follow at residues 303–342 and 343–382; these read PLRS…TLLA and QADL…IRAQ.

This sequence belongs to the WD repeat fritz family. As to quaternary structure, interacts with sept2-a. Interacts with intu and fuz; fuz, intu and wdpcp probably form the core CPLANE (ciliogenesis and planar polarity effectors) complex.

The protein resides in the cell membrane. It localises to the cytoplasm. The protein localises to the cytoskeleton. Its subcellular location is the cilium axoneme. It is found in the cilium basal body. Its function is as follows. Probable effector of the planar cell polarity signaling pathway which regulates the septin cytoskeleton in both ciliogenesis and collective cell movements including covergent extension during gastrulation. Controls cell shape but not polarization during convergent extension. Proposed to function as core component of the CPLANE (ciliogenesis and planar polarity effectors) complex involved in the recruitment of peripheral IFT-A proteins to basal bodies. The polypeptide is WD repeat-containing and planar cell polarity effector protein fritz homolog (wdpcp) (Xenopus laevis (African clawed frog)).